We begin with the raw amino-acid sequence, 350 residues long: TLC domain-containing protein fld-1 (350 aa).

The helical transmembrane segment at 9–29 threads the bilayer; the sequence is TDLLGPVPTMFLWVIVSFAFF. A disordered region spans residues 65–100; that stretch reads GQEAENTENPPENEAEAGEQVEQEPEPDSRDLSAIP. A compositionally biased stretch (acidic residues) spans 75–90; it reads PENEAEAGEQVEQEPE. A TLC domain is found at 102-279; that stretch reads NKKWRISNEC…IINGLVIASL (178 aa). The next 6 helical transmembrane spans lie at 111–131, 145–165, 173–193, 195–215, 229–249, and 270–292; these read CVSL…LLYY, VAIN…VDLL, IIEL…TMFF, RFLG…FLHS, PSFR…RLCV, and IING…RLLA.

Ubiquitously expressed.

It localises to the cell membrane. In terms of biological role, regulates the composition and fluidity of the plasma membrane. Inhibits the incorporation of membrane-fluidizing phospholipids containing omega-3 long-chain polyunsaturated fatty acids (LCPUFA) and thereby promotes membrane rigidity. Does not appear to have any effect on LCPUFA synthesis. The sequence is that of TLC domain-containing protein fld-1 from Caenorhabditis elegans.